The chain runs to 95 residues: Small ribosomal subunit protein bS6 (95 aa).

The protein belongs to the bacterial ribosomal protein bS6 family.

In terms of biological role, binds together with bS18 to 16S ribosomal RNA. The sequence is that of Small ribosomal subunit protein bS6 from Onion yellows phytoplasma (strain OY-M).